A 171-amino-acid chain; its full sequence is Translation initiation factor IF-3 (171 aa).

This sequence belongs to the IF-3 family. Monomer.

Its subcellular location is the cytoplasm. Its function is as follows. IF-3 binds to the 30S ribosomal subunit and shifts the equilibrium between 70S ribosomes and their 50S and 30S subunits in favor of the free subunits, thus enhancing the availability of 30S subunits on which protein synthesis initiation begins. In Listeria innocua serovar 6a (strain ATCC BAA-680 / CLIP 11262), this protein is Translation initiation factor IF-3.